An 84-amino-acid chain; its full sequence is Cell division topological specificity factor (84 aa).

Belongs to the MinE family.

Functionally, prevents the cell division inhibition by proteins MinC and MinD at internal division sites while permitting inhibition at polar sites. This ensures cell division at the proper site by restricting the formation of a division septum at the midpoint of the long axis of the cell. In Cupriavidus necator (strain ATCC 17699 / DSM 428 / KCTC 22496 / NCIMB 10442 / H16 / Stanier 337) (Ralstonia eutropha), this protein is Cell division topological specificity factor.